Consider the following 494-residue polypeptide: Alpha-amylase-related protein (494 aa).

The first 20 residues, 1–20 (MFKFASAVILCLVAASSTQA), serve as a signal peptide directing secretion. Gln-21 carries the post-translational modification Pyrrolidone carboxylic acid. Residues Cys-48 and Cys-104 are joined by a disulfide bond. Ca(2+)-binding residues include Asn-118, Gln-169, and Asp-178. Cysteines 157 and 171 form a disulfide. Position 206 (Arg-206) interacts with chloride. Residue Asp-208 is the Nucleophile of the active site. His-212 contacts Ca(2+). Glu-245 functions as the Proton donor in the catalytic mechanism. Positions 308 and 343 each coordinate chloride. Cystine bridges form between Cys-376/Cys-382, Cys-418/Cys-441, and Cys-448/Cys-460.

It belongs to the glycosyl hydrolase 13 family. As to quaternary structure, monomer. Requires Ca(2+) as cofactor. Chloride serves as cofactor.

Its subcellular location is the secreted. It carries out the reaction Endohydrolysis of (1-&gt;4)-alpha-D-glucosidic linkages in polysaccharides containing three or more (1-&gt;4)-alpha-linked D-glucose units.. The sequence is that of Alpha-amylase-related protein (Amyrel) from Drosophila ercepeae (Fruit fly).